A 546-amino-acid polypeptide reads, in one-letter code: Tegument protein UL21 homolog (546 aa).

This sequence belongs to the alphaherpesvirinae HHV-1 UL21 protein family.

Its subcellular location is the virion tegument. The protein localises to the host cytoplasm. It localises to the host nucleus. Its function is as follows. May facilitate the viral transport through neural circuits. The sequence is that of Tegument protein UL21 homolog (MDV033) from Gallus gallus (Chicken).